The sequence spans 171 residues: Skp-like protein (171 aa).

The first 21 residues, 1–21 (MKKLLFSTFLLVLGSTSAAHA), serve as a signal peptide directing secretion.

It belongs to the Skp family.

This Chlamydia pneumoniae (Chlamydophila pneumoniae) protein is Skp-like protein.